The following is a 484-amino-acid chain: MKGLLLRIIAAFALVLWAIDMVFPWQQMMRSEENRYNAIQQRGKLVVGTVNNPVSYFIGNEGQAGLEYELSRAFADYLGVELEMKAMDNGEQLFDALEDNEIDIAAANLLYQAKKAETFQLGPAYYSASWQLVYRKGESRPQSLSQIKDKLIIARGSELPLILQGYQTKYPNLKWQLENNQTQEELLLQVAQGKIKYTVANSIDVSAVQQVRPEIAVAFDVTDEASVHWYLPNNSYNELQAALLDFMNTALEGGLIARIEEKYFNHFSQFDYVDMRQYVQAINDILPKYAPLFDRYKGDLDWRLLAAIAYQESHWNENATSPTGVRGMMMLTKDTAERMKIADRTDAEQSIKAGSEYLHWLISQVPDSIPKEDRIWFALTGYNMGLGHMLDARRLTKNLGGDPDNWLDVKKNLPLLAEKRYYPNLKYGYARGYEAFQYVENIRRYMNSIINYYRVQENADNKDKPSETDENLPLPLTDNQEKQE.

A signal peptide spans 1–18 (MKGLLLRIIAAFALVLWA). A non-LT domain region spans residues 19–267 (IDMVFPWQQM…RIEEKYFNHF (249 aa)). The interval 268–484 (SQFDYVDMRQ…PLTDNQEKQE (217 aa)) is LT domain. The active site involves glutamate 312. Residues 459–484 (ADNKDKPSETDENLPLPLTDNQEKQE) form a disordered region.

The protein in the N-terminal section; belongs to the bacterial solute-binding protein 3 family. This sequence in the C-terminal section; belongs to the transglycosylase Slt family.

The protein resides in the cell outer membrane. The catalysed reaction is Exolytic cleavage of the (1-&gt;4)-beta-glycosidic linkage between N-acetylmuramic acid (MurNAc) and N-acetylglucosamine (GlcNAc) residues in peptidoglycan, from either the reducing or the non-reducing ends of the peptidoglycan chains, with concomitant formation of a 1,6-anhydrobond in the MurNAc residue.. Its function is as follows. Murein-degrading enzyme that degrades murein glycan strands and insoluble, high-molecular weight murein sacculi, with the concomitant formation of a 1,6-anhydromuramoyl product. Lytic transglycosylases (LTs) play an integral role in the metabolism of the peptidoglycan (PG) sacculus. Their lytic action creates space within the PG sacculus to allow for its expansion as well as for the insertion of various structures such as secretion systems and flagella. The polypeptide is Membrane-bound lytic murein transglycosylase F (Mannheimia succiniciproducens (strain KCTC 0769BP / MBEL55E)).